The following is a 185-amino-acid chain: Peptidyl-tRNA hydrolase (185 aa).

Residue Tyr14 participates in tRNA binding. The Proton acceptor role is filled by His19. TRNA contacts are provided by Phe64, Asn66, and Asn112.

Belongs to the PTH family. In terms of assembly, monomer.

The protein localises to the cytoplasm. The catalysed reaction is an N-acyl-L-alpha-aminoacyl-tRNA + H2O = an N-acyl-L-amino acid + a tRNA + H(+). Hydrolyzes ribosome-free peptidyl-tRNAs (with 1 or more amino acids incorporated), which drop off the ribosome during protein synthesis, or as a result of ribosome stalling. Its function is as follows. Catalyzes the release of premature peptidyl moieties from peptidyl-tRNA molecules trapped in stalled 50S ribosomal subunits, and thus maintains levels of free tRNAs and 50S ribosomes. The polypeptide is Peptidyl-tRNA hydrolase (Alkaliphilus metalliredigens (strain QYMF)).